A 395-amino-acid chain; its full sequence is Phosphoprotein (395 aa).

A nuclear localization signal (NLS) region spans residues 65–72 (PVKPRRKK). Residues 178 to 217 (NGVLHGSEIRSKSSSGVIPGVPQSRPQLASSPAHADPAPA) form a disordered region. A compositionally biased stretch (low complexity) spans 206-217 (ASSPAHADPAPA). Residues 225–234 (IIELLKGLDL) are nuclear export signal (NES).

It belongs to the rubulavirus/avulavirus P protein family. As to quaternary structure, interacts with host ARHGAP26; this interaction promotes host RHOA activation. Interacts with host KPNA1 and KPNA6.

It localises to the host cytoplasm. In terms of biological role, essential component of the RNA polymerase and the nascent chain assembly complex. Also required during RNA synthesis. Also plays a role in viral growth by promoting host RHOA activation and thus actin formation via ARHGAP26 inhibition. This is Phosphoprotein (P/V) from Human parainfluenza 2 virus (HPIV-2).